The following is an 877-amino-acid chain: MSSSANSSPATTKFKFTDNLWDGFDLLVKRTDNDLIQSKNILNFFKKKAELEEQHSKKLEKLSLKTMMTIDESTSINAISYNSSWKKIINSSMMESEQHTLLNTSILNKVIQPLQAMIKDMETKRKKILQEGIKLKQDMKEMVDELKKSQFKYDKAGKDLESSRMELREYREQLDHQQQQQPSDSDLNNISKIERRIQRCEQDFSNCDEEYREQIKATNDFQHLYNTEKLPKILNDFEHFVISHSHFSKSYFTNLVSVLIELPSAYQQNYEFVKKSVEMIDITNDVQEFIRKNLMKKQLAQPFQYEPYIEGKLTKKTISLTWNNKILSQFSRSSNNNTATANNTSSGNLNPYLNGGIGGTKKDEPILPTASFKVSLDELMNRQKDNHPTLEVPYVLQVLSTRIAQMKGHVTEGIFRVPGIISTIKETRLRIDKADFNLSNIDDVRTPAALLKQWLRDIPTALIPDSLYQQCIDTPTNAIAIVKTIPIINQRVLCYLINFLQIFTKFEFVAHSKMGTSNLAMVFAPCILRCTSTDANVMLNNVPNERLFVETLIKQIPPPLNTNEFLNLPISMSDAINDSEDIEELNDLDQLSNDDNNNSNTNTSNISIGSGSNSNIVVNYSNNSPNIESSTLPSQSVVTTIETLPPLNDDHNSGSGNESNSSSSNSTTTPTGSPTTASKPRGPRTQTLGWVRIKPAPKPSAEPTITLSSSIAAGTTTTTTTATGITTTTTTTAGPEKTIISPVIIKPAAATPTTTTPTTTPTTTTSPTTATIPAVSTSTIKTSSPDRTTPLTSSPPLASTKSTDELMKKLDQFTQETTPSIRIATTTTPTTITTPTTTATTTTITTDKTTPVTSSPPTASNISSEDLMKKLDQFINF.

Residues 14 to 285 (FKFTDNLWDG…SVEMIDITND (272 aa)) form the F-BAR domain. Residues 130-214 (QEGIKLKQDM…SNCDEEYREQ (85 aa)) are a coiled coil. A Rho-GAP domain is found at 374 to 560 (VSLDELMNRQ…TLIKQIPPPL (187 aa)). Disordered regions lie at residues 589–612 (DQLSNDDNNNSNTNTSNISIGSGS), 644–704 (LPPL…AEPT), and 749–800 (AATP…LAST). Low complexity-rich tracts occupy residues 593 to 612 (NDDNNNSNTNTSNISIGSGS), 653 to 676 (SGSGNESNSSSSNSTTTPTGSPTT), and 749 to 779 (AATPTTTTPTTTPTTTTSPTTATIPAVSTST). Polar residues predominate over residues 780 to 800 (IKTSSPDRTTPLTSSPPLAST).

It is found in the cytoplasm. The protein resides in the contractile vacuole. Functionally, rho GTPase-activating protein involved in the signal transduction pathway. Regulator of the contractile vacuole network as well as involved in driving vacuole emptying. This Dictyostelium discoideum (Social amoeba) protein is GTPase activating protein homolog 2 (mgp2).